A 130-amino-acid chain; its full sequence is Small ribosomal subunit protein uS9 (130 aa).

This sequence belongs to the universal ribosomal protein uS9 family.

The polypeptide is Small ribosomal subunit protein uS9 (Aliivibrio salmonicida (strain LFI1238) (Vibrio salmonicida (strain LFI1238))).